Consider the following 589-residue polypeptide: Protein sprouty (589 aa).

Disordered stretches follow at residues 1-37, 102-194, and 239-320; these read MDRR…GVDH, RPSS…RPES, and LHLQ…MGLG. 2 stretches are compositionally biased toward low complexity: residues 104–135 and 148–162; these read SSLS…SSSS and NNSI…INNN. A compositionally biased stretch (polar residues) spans 163–172; sequence FLSHFQSAEP. Over residues 239–272 the composition is skewed to low complexity; the sequence is LHLQQHQQHLQQQQQQQQQQQQQQHLQHQQNQQH. Residues 276–286 are compositionally biased toward polar residues; it reads ATTTQATSVGS. In terms of domain architecture, SPR spans 380–499; sequence RCGRCRCEQC…CYGRFAGRGC (120 aa).

This sequence belongs to the sprouty family. In terms of assembly, interacts with DRK and RasGAP1 proteins of the Ras pathway. In terms of tissue distribution, in ovary, expressed from stage 7 of oogenesis in the posterior follicle cells and during stage 9 when the follicle cells migrate posteriorly over the oocyte nucleus, expression is seen in the dorsal and lateral cells and is excluded from the ventral cells. Once the migration of follicle cells is complete expressed in the dorsal-anterior corner of the egg chamber. Expressed in the embryonic tracheal system, developing eye imaginal disk, embryonic chordotonal organ precursors, midline glia and wing imaginal disk.

Its subcellular location is the cell membrane. Its function is as follows. Inhibitor of tracheal branching that restricts branch budding by antagonizing the BNL-FGF pathway (BNL: branchless, an fgf inducer of branching). Acts as an antagonist of EGFR-mediated signaling in the eye (where it is important for cell determination) midline glia, chordotonal organs, wing and ovarian follicle cells. This chain is Protein sprouty (sty), found in Drosophila melanogaster (Fruit fly).